The chain runs to 264 residues: Phosphonoacetaldehyde hydrolase (264 aa).

D9 (nucleophile) is an active-site residue. Positions 9 and 11 each coordinate Mg(2+). Catalysis depends on K50, which acts as the Schiff-base intermediate with substrate. D183 contacts Mg(2+).

Belongs to the HAD-like hydrolase superfamily. PhnX family. Homodimer. It depends on Mg(2+) as a cofactor.

The catalysed reaction is phosphonoacetaldehyde + H2O = acetaldehyde + phosphate + H(+). In terms of biological role, involved in phosphonate degradation. The polypeptide is Phosphonoacetaldehyde hydrolase (Bacillus cereus (strain ATCC 10987 / NRS 248)).